A 262-amino-acid chain; its full sequence is Mlc titration factor A (262 aa).

The Zn(2+) site is built by His111, His148, His152, and Glu211.

The protein belongs to the MtfA family. Interacts with Mlc. Zn(2+) serves as cofactor.

It localises to the cytoplasm. Functionally, involved in the modulation of the activity of the glucose-phosphotransferase system (glucose-PTS). Interacts with the transcriptional repressor Mlc, preventing its interaction with DNA and leading to the modulation of expression of genes regulated by Mlc, including ptsG, which encodes the PTS system glucose-specific EIICB component. In terms of biological role, shows zinc-dependent metallopeptidase activity. This is Mlc titration factor A from Serratia proteamaculans (strain 568).